A 396-amino-acid chain; its full sequence is Serine/threonine-protein kinase 32A (396 aa).

G2 carries the N-myristoyl glycine lipid modification. One can recognise a Protein kinase domain in the interval 23-281 (FEILRAIGKG…LSDVQNFPYM (259 aa)). Residues 29-37 (IGKGSFGKV) and K52 contribute to the ATP site. D146 functions as the Proton acceptor in the catalytic mechanism. Positions 373–396 (KRQPNLALEQTKDPQGEDGQNNNL) are disordered.

The protein belongs to the protein kinase superfamily. Ser/Thr protein kinase family. The cofactor is Mg(2+).

Its subcellular location is the cell membrane. It catalyses the reaction L-seryl-[protein] + ATP = O-phospho-L-seryl-[protein] + ADP + H(+). The enzyme catalyses L-threonyl-[protein] + ATP = O-phospho-L-threonyl-[protein] + ADP + H(+). The chain is Serine/threonine-protein kinase 32A (STK32A) from Homo sapiens (Human).